A 427-amino-acid chain; its full sequence is Glutamate-1-semialdehyde 2,1-aminomutase (427 aa).

Lysine 265 bears the N6-(pyridoxal phosphate)lysine mark.

It belongs to the class-III pyridoxal-phosphate-dependent aminotransferase family. HemL subfamily. As to quaternary structure, homodimer. The cofactor is pyridoxal 5'-phosphate.

Its subcellular location is the cytoplasm. It catalyses the reaction (S)-4-amino-5-oxopentanoate = 5-aminolevulinate. It functions in the pathway porphyrin-containing compound metabolism; protoporphyrin-IX biosynthesis; 5-aminolevulinate from L-glutamyl-tRNA(Glu): step 2/2. The polypeptide is Glutamate-1-semialdehyde 2,1-aminomutase (Pseudomonas syringae pv. tomato (strain ATCC BAA-871 / DC3000)).